Consider the following 517-residue polypeptide: Pentatricopeptide repeat-containing protein At1g13040, mitochondrial (517 aa).

The N-terminal 57 residues, 1 to 57 (MHQTLGAVRLAYRSRIANLVKSGMIDNAVQVFDEMRHSSYRVFSFDYNRFIGVLVRE), are a transit peptide targeting the mitochondrion. 14 PPR repeats span residues 8-42 (VRLAYRSRIANLVKSGMIDNAVQVFDEMRHSSYRV), 43-77 (FSFDYNRFIGVLVRESRFELAEAIYWDMKPMGFSL), 78-112 (IPFTYSRFISGLCKVKKFDLIDALLSDMETLGFIP), 113-147 (DIWAFNVYLDLLCRENKVGFAVQTFFCMVQRGREP), 148-182 (DVVSYTILINGLFRAGKVTDAVEIWNAMIRSGVSP), 183-218 (DNKACAALVVGLCHARKVDLAYEMVAEEIKSARVKL), 219-253 (STVVYNALISGFCKAGRIEKAEALKSYMSKIGCEP), 254-288 (DLVTYNVLLNYYYDNNMLKRAEGVMAEMVRSGIQL), 289-320 (DAYSYNQLLKRHCRVSHPDKCYNFMVKEMEPR), 324-358 (DVVSYSTLIETFCRASNTRKAYRLFEEMRQKGMVM), 359-393 (NVVTYTSLIKAFLREGNSSVAKKLLDQMTELGLSP), 394-428 (DRIFYTTILDHLCKSGNVDKAYGVFNDMIEHEITP), 429-463 (DAISYNSLISGLCRSGRVTEAIKLFEDMKGKECCP), and 464-498 (DELTFKFIIGGLIRGKKLSAAYKVWDQMMDKGFTL).

It belongs to the PPR family. P subfamily.

Its subcellular location is the mitochondrion. This chain is Pentatricopeptide repeat-containing protein At1g13040, mitochondrial, found in Arabidopsis thaliana (Mouse-ear cress).